The primary structure comprises 92 residues: Small integral membrane protein 12 (92 aa).

Residues 15 to 34 form a helical membrane-spanning segment; the sequence is YVTFPVAFVVGAVGYHLEWF.

The protein belongs to the SMIM12 family.

Its subcellular location is the membrane. This is Small integral membrane protein 12 (SMIM12) from Canis lupus familiaris (Dog).